The primary structure comprises 253 residues: N-acetylglucosaminyl-phosphatidylinositol de-N-acetylase (253 aa).

The chain crosses the membrane as a helical span at residues 3-23; that stretch reads VAAPLLCLAAAVLVWGVLWVW. Topologically, residues 24-253 are cytoplasmic; it reads GSWERMTRPE…YMRINSLNFL (230 aa).

The protein belongs to the PIGL family.

The protein localises to the endoplasmic reticulum membrane. It catalyses the reaction a 6-(N-acetyl-alpha-D-glucosaminyl)-1-(1,2-diacyl-sn-glycero-3-phospho)-1D-myo-inositol + H2O = a 6-(alpha-D-glucosaminyl)-1-(1,2-diacyl-sn-glycero-3-phospho)-1D-myo-inositol + acetate. It functions in the pathway glycolipid biosynthesis; glycosylphosphatidylinositol-anchor biosynthesis. Catalyzes the second step of glycosylphosphatidylinositol (GPI) biosynthesis, which is the de-N-acetylation of N-acetylglucosaminyl-phosphatidylinositol. In Bos taurus (Bovine), this protein is N-acetylglucosaminyl-phosphatidylinositol de-N-acetylase (PIGL).